A 115-amino-acid chain; its full sequence is Large ribosomal subunit protein bL19 (115 aa).

This sequence belongs to the bacterial ribosomal protein bL19 family.

In terms of biological role, this protein is located at the 30S-50S ribosomal subunit interface and may play a role in the structure and function of the aminoacyl-tRNA binding site. This is Large ribosomal subunit protein bL19 from Edwardsiella ictaluri (strain 93-146).